Consider the following 78-residue polypeptide: Large ribosomal subunit protein bL28 (78 aa).

The segment at 1–22 is disordered; sequence MSRVCQVTGKRPMSGNNRSHAM.

Belongs to the bacterial ribosomal protein bL28 family.

In Yersinia pseudotuberculosis serotype O:1b (strain IP 31758), this protein is Large ribosomal subunit protein bL28.